A 186-amino-acid polypeptide reads, in one-letter code: Translation initiation factor IF-3 (186 aa).

This sequence belongs to the IF-3 family. As to quaternary structure, monomer.

The protein resides in the cytoplasm. Its function is as follows. IF-3 binds to the 30S ribosomal subunit and shifts the equilibrium between 70S ribosomes and their 50S and 30S subunits in favor of the free subunits, thus enhancing the availability of 30S subunits on which protein synthesis initiation begins. The protein is Translation initiation factor IF-3 of Borreliella burgdorferi (strain ATCC 35210 / DSM 4680 / CIP 102532 / B31) (Borrelia burgdorferi).